Reading from the N-terminus, the 626-residue chain is Putative ankyrin repeat protein R837 (626 aa).

18 ANK repeats span residues 42-72 (EYFNLIDFIIETKSMEVLKYIYQSKTNGLIR), 80-109 (TLNTSLLTSCQNGNILLVKFFIEKGANHRY), 110-139 (SEDKPLGIAAANGHSDIVEYLVNGGANIKS), 140-169 (RNNYALRFAVKNGHYNMVKFLIEQGVDITV), 171-199 (DYEVFYTSCEYGHYEIFVYLMKNINDIKK), 201-230 (NKKRLLKKAFKGGSVKIVHYIFNDILDVYR), 242-269 (KNYKLLNIIGKYGNHDILEYLHNRYQLS), 270-298 (DTNNIAQVAALYGHFRIVKFLLDKYLHEL), 299-328 (NLNQLIISACDNGSIKMVKFLIEKGIDINT), 330-358 (GNSCLSHAILSGNTDLLHYLTNIGCRLTS), 393-416 (TIMSTSMYCGIIKLVKYFVDKSSL), 417-446 (DYESYICGIISNGHVNIIKYLLNQNKITKQ), 452-479 (INNSVILTIIQYGHIDMLKYLVSLGINI), 480-509 (CINYALDRAVSYGHLNIVEYLLELGHNINE), 510-539 (FGDLPLRSATIANNINMVKYLVSQGANIYI), 540-569 (IKDNPIYLASIHGHVKLVKYFIDLGSDYHK), 570-599 (KNELPLYVAIINNNLDVVKCLVEHGCKTKT), and 601-626 (FFDPIETAMEYYNNEIVEYLQNNEIK).

The protein is Putative ankyrin repeat protein R837 of Acanthamoeba polyphaga (Amoeba).